Consider the following 391-residue polypeptide: S-adenosylmethionine synthase (391 aa).

Position 14 (histidine 14) interacts with ATP. Aspartate 16 provides a ligand contact to Mg(2+). Glutamate 42 lines the K(+) pocket. Glutamate 55 and glutamine 98 together coordinate L-methionine. Positions glutamine 98–glutamate 108 are flexible loop. ATP-binding positions include aspartate 172–lysine 174, arginine 238–phenylalanine 239, aspartate 247, arginine 253–lysine 254, alanine 270, and lysine 274. Residue aspartate 247 participates in L-methionine binding. L-methionine is bound at residue lysine 278.

Belongs to the AdoMet synthase family. As to quaternary structure, homotetramer; dimer of dimers. Mg(2+) serves as cofactor. It depends on K(+) as a cofactor.

The protein resides in the cytoplasm. It carries out the reaction L-methionine + ATP + H2O = S-adenosyl-L-methionine + phosphate + diphosphate. It functions in the pathway amino-acid biosynthesis; S-adenosyl-L-methionine biosynthesis; S-adenosyl-L-methionine from L-methionine: step 1/1. Functionally, catalyzes the formation of S-adenosylmethionine (AdoMet) from methionine and ATP. The overall synthetic reaction is composed of two sequential steps, AdoMet formation and the subsequent tripolyphosphate hydrolysis which occurs prior to release of AdoMet from the enzyme. The polypeptide is S-adenosylmethionine synthase (Clostridium acetobutylicum (strain ATCC 824 / DSM 792 / JCM 1419 / IAM 19013 / LMG 5710 / NBRC 13948 / NRRL B-527 / VKM B-1787 / 2291 / W)).